The sequence spans 98 residues: Co-chaperonin GroES (98 aa).

It belongs to the GroES chaperonin family. In terms of assembly, heptamer of 7 subunits arranged in a ring. Interacts with the chaperonin GroEL.

It localises to the cytoplasm. Together with the chaperonin GroEL, plays an essential role in assisting protein folding. The GroEL-GroES system forms a nano-cage that allows encapsulation of the non-native substrate proteins and provides a physical environment optimized to promote and accelerate protein folding. GroES binds to the apical surface of the GroEL ring, thereby capping the opening of the GroEL channel. The polypeptide is Co-chaperonin GroES (Allorhizobium ampelinum (strain ATCC BAA-846 / DSM 112012 / S4) (Agrobacterium vitis (strain S4))).